We begin with the raw amino-acid sequence, 162 residues long: Ribosome maturation factor RimM (162 aa).

The PRC barrel domain occupies 86-160 (EGRYYYFALI…GIHVDPIPGL (75 aa)).

The protein belongs to the RimM family. As to quaternary structure, binds ribosomal protein uS19.

The protein resides in the cytoplasm. Its function is as follows. An accessory protein needed during the final step in the assembly of 30S ribosomal subunit, possibly for assembly of the head region. Essential for efficient processing of 16S rRNA. May be needed both before and after RbfA during the maturation of 16S rRNA. It has affinity for free ribosomal 30S subunits but not for 70S ribosomes. The sequence is that of Ribosome maturation factor RimM from Thermus thermophilus (strain ATCC BAA-163 / DSM 7039 / HB27).